Consider the following 176-residue polypeptide: Inorganic pyrophosphatase (176 aa).

Substrate contacts are provided by K30, R44, and Y56. Residues D66, D71, and D103 each coordinate Mg(2+). Y142 is a substrate binding site.

Belongs to the PPase family. Homohexamer. Requires Mg(2+) as cofactor.

The protein localises to the cytoplasm. The catalysed reaction is diphosphate + H2O = 2 phosphate + H(+). In terms of biological role, catalyzes the hydrolysis of inorganic pyrophosphate (PPi) forming two phosphate ions. In Salmonella typhi, this protein is Inorganic pyrophosphatase.